Reading from the N-terminus, the 956-residue chain is Zinc protease PQQL-like (956 aa).

The residue at position 1 (M1) is an N-acetylmethionine. H85 provides a ligand contact to Zn(2+). The active-site Proton acceptor is E88. Residue H89 coordinates Zn(2+). The active site involves E165. A Zn(2+)-binding site is contributed by E172.

It belongs to the peptidase M16 family. Zn(2+) serves as cofactor.

The sequence is that of Zinc protease PQQL-like from Arabidopsis thaliana (Mouse-ear cress).